The following is a 286-amino-acid chain: MKQYLDFLKWVLEKGKHKENRTSVDTISAFGYQMRFDLSKGFPLVTTKKTNFSAIAHELLWFIKGDTNIKYLVDNKVNIWNQWPYESYKKSQDFQSESLKEFIQKIKDDNEFAQKHGNLGPVYGKQWRDFLGIDQLKKVIEQIKNNPNSRRLIVSSWNPSEIDTMLLPPCHTLFQFYVNDNKLSCHLYQRSADAFLGIPFNIASYALLTFLLAQETNLEVGDFVHSIGDAHIYVNHLEQVKTQLKRNPKELPKLIIKNKNIFEINFEDIELVDYEFDPIIKGEVAV.

Arg-21 contributes to the dUMP binding site. Asn-51 is a (6R)-5,10-methylene-5,6,7,8-tetrahydrofolate binding site. 150 to 151 (RR) is a binding site for dUMP. Cys-170 serves as the catalytic Nucleophile. Residues 190-193 (RSAD), Asn-201, and 231-233 (HIY) contribute to the dUMP site. Asp-193 serves as a coordination point for (6R)-5,10-methylene-5,6,7,8-tetrahydrofolate. Ala-285 is a (6R)-5,10-methylene-5,6,7,8-tetrahydrofolate binding site.

The protein belongs to the thymidylate synthase family. Bacterial-type ThyA subfamily. In terms of assembly, homodimer.

It localises to the cytoplasm. The enzyme catalyses dUMP + (6R)-5,10-methylene-5,6,7,8-tetrahydrofolate = 7,8-dihydrofolate + dTMP. It participates in pyrimidine metabolism; dTTP biosynthesis. In terms of biological role, catalyzes the reductive methylation of 2'-deoxyuridine-5'-monophosphate (dUMP) to 2'-deoxythymidine-5'-monophosphate (dTMP) while utilizing 5,10-methylenetetrahydrofolate (mTHF) as the methyl donor and reductant in the reaction, yielding dihydrofolate (DHF) as a by-product. This enzymatic reaction provides an intracellular de novo source of dTMP, an essential precursor for DNA biosynthesis. In Mycoplasmopsis pulmonis (strain UAB CTIP) (Mycoplasma pulmonis), this protein is Thymidylate synthase.